An 88-amino-acid chain; its full sequence is Small ribosomal subunit protein bS16 (88 aa).

The protein belongs to the bacterial ribosomal protein bS16 family.

This Geotalea uraniireducens (strain Rf4) (Geobacter uraniireducens) protein is Small ribosomal subunit protein bS16.